Reading from the N-terminus, the 35-residue chain is Probable L,D-transpeptidase ErfK/SrfK (35 aa).

Positions 1 to 21 are cleaved as a signal peptide; that stretch reads MRRVKLLCTALMLLASHGALA.

The protein belongs to the YkuD family.

It is found in the periplasm. The protein operates within cell wall biogenesis; peptidoglycan biosynthesis. The protein is Probable L,D-transpeptidase ErfK/SrfK (erfK) of Klebsiella aerogenes (Enterobacter aerogenes).